The primary structure comprises 610 residues: Dihydroxy-acid dehydratase (610 aa).

Position 81 (D81) interacts with Mg(2+). [2Fe-2S] cluster is bound at residue C122. Residues D123 and K124 each contribute to the Mg(2+) site. Position 124 is an N6-carboxylysine (K124). C193 contributes to the [2Fe-2S] cluster binding site. E489 lines the Mg(2+) pocket. The Proton acceptor role is filled by S515.

Belongs to the IlvD/Edd family. As to quaternary structure, homodimer. [2Fe-2S] cluster is required as a cofactor. Mg(2+) serves as cofactor.

The enzyme catalyses (2R)-2,3-dihydroxy-3-methylbutanoate = 3-methyl-2-oxobutanoate + H2O. It catalyses the reaction (2R,3R)-2,3-dihydroxy-3-methylpentanoate = (S)-3-methyl-2-oxopentanoate + H2O. The protein operates within amino-acid biosynthesis; L-isoleucine biosynthesis; L-isoleucine from 2-oxobutanoate: step 3/4. Its pathway is amino-acid biosynthesis; L-valine biosynthesis; L-valine from pyruvate: step 3/4. Functions in the biosynthesis of branched-chain amino acids. Catalyzes the dehydration of (2R,3R)-2,3-dihydroxy-3-methylpentanoate (2,3-dihydroxy-3-methylvalerate) into 2-oxo-3-methylpentanoate (2-oxo-3-methylvalerate) and of (2R)-2,3-dihydroxy-3-methylbutanoate (2,3-dihydroxyisovalerate) into 2-oxo-3-methylbutanoate (2-oxoisovalerate), the penultimate precursor to L-isoleucine and L-valine, respectively. This is Dihydroxy-acid dehydratase from Xylella fastidiosa (strain M12).